Reading from the N-terminus, the 203-residue chain is ATP-dependent Clp protease proteolytic subunit (203 aa).

The Nucleophile role is filled by serine 107. Histidine 132 is an active-site residue.

Belongs to the peptidase S14 family. In terms of assembly, fourteen ClpP subunits assemble into 2 heptameric rings which stack back to back to give a disk-like structure with a central cavity, resembling the structure of eukaryotic proteasomes.

The protein resides in the cytoplasm. It catalyses the reaction Hydrolysis of proteins to small peptides in the presence of ATP and magnesium. alpha-casein is the usual test substrate. In the absence of ATP, only oligopeptides shorter than five residues are hydrolyzed (such as succinyl-Leu-Tyr-|-NHMec, and Leu-Tyr-Leu-|-Tyr-Trp, in which cleavage of the -Tyr-|-Leu- and -Tyr-|-Trp bonds also occurs).. Cleaves peptides in various proteins in a process that requires ATP hydrolysis. Has a chymotrypsin-like activity. Plays a major role in the degradation of misfolded proteins. In Shewanella frigidimarina (strain NCIMB 400), this protein is ATP-dependent Clp protease proteolytic subunit.